We begin with the raw amino-acid sequence, 255 residues long: 5'-nucleotidase SurE (255 aa).

A divalent metal cation contacts are provided by aspartate 8, aspartate 9, serine 40, and asparagine 95.

Belongs to the SurE nucleotidase family. A divalent metal cation is required as a cofactor.

Its subcellular location is the cytoplasm. It catalyses the reaction a ribonucleoside 5'-phosphate + H2O = a ribonucleoside + phosphate. Its function is as follows. Nucleotidase that shows phosphatase activity on nucleoside 5'-monophosphates. This chain is 5'-nucleotidase SurE, found in Solidesulfovibrio magneticus (strain ATCC 700980 / DSM 13731 / RS-1) (Desulfovibrio magneticus).